The chain runs to 311 residues: Mitoferrin (311 aa).

Solcar repeat units lie at residues 15 to 102 (HSIP…MKSF), 111 to 195 (EHTL…WQQV), and 202 to 302 (YDPK…FKFM). 6 consecutive transmembrane segments (helical) span residues 17–36 (IPVHLAAGALAGAVEHCVMF), 77–96 (GVNAVAAGSMPAHALYFTVY), 112–132 (HTLAYGASGVVATLIHDAVMN), 170–189 (SYTTQLAMNVPFQAIHFMGY), 204–223 (PKSHLIAGGLAGGLAAAVTT), and 277–296 (GLQARVIFQVPATALSWSVY).

Belongs to the mitochondrial carrier (TC 2.A.29) family.

The protein resides in the mitochondrion inner membrane. Functionally, mitochondrial iron transporter that mediates iron uptake. Probably required for heme synthesis of hemoproteins and Fe-S cluster assembly. The chain is Mitoferrin from Caenorhabditis briggsae.